Reading from the N-terminus, the 455-residue chain is L-serine dehydratase (455 aa).

It belongs to the iron-sulfur dependent L-serine dehydratase family. [4Fe-4S] cluster serves as cofactor.

It carries out the reaction L-serine = pyruvate + NH4(+). Its pathway is carbohydrate biosynthesis; gluconeogenesis. This is L-serine dehydratase (sdaA) from Helicobacter pylori (strain ATCC 700392 / 26695) (Campylobacter pylori).